Consider the following 490-residue polypeptide: 3-octaprenyl-4-hydroxybenzoate carboxy-lyase (490 aa).

Asn-172 is a binding site for Mn(2+). Prenylated FMN-binding positions include 175–177 (IYR), 189–191 (RWL), and 194–195 (RG). Glu-238 contacts Mn(2+). Asp-287 (proton donor) is an active-site residue.

It belongs to the UbiD family. Homohexamer. Prenylated FMN serves as cofactor. Requires Mn(2+) as cofactor.

It is found in the cell membrane. It carries out the reaction a 4-hydroxy-3-(all-trans-polyprenyl)benzoate + H(+) = a 2-(all-trans-polyprenyl)phenol + CO2. Its pathway is cofactor biosynthesis; ubiquinone biosynthesis. In terms of biological role, catalyzes the decarboxylation of 3-octaprenyl-4-hydroxy benzoate to 2-octaprenylphenol, an intermediate step in ubiquinone biosynthesis. This is 3-octaprenyl-4-hydroxybenzoate carboxy-lyase from Saccharophagus degradans (strain 2-40 / ATCC 43961 / DSM 17024).